A 120-amino-acid chain; its full sequence is ESAT-6-like protein EsxQ (120 aa).

It belongs to the WXG100 family. ESAT-6 subfamily.

Its subcellular location is the secreted. This chain is ESAT-6-like protein EsxQ, found in Mycobacterium bovis (strain ATCC BAA-935 / AF2122/97).